The following is a 181-amino-acid chain: NADH-quinone oxidoreductase subunit I (181 aa).

2 consecutive 4Fe-4S ferredoxin-type domains span residues threonine 52–glycine 81 and lysine 91–aspartate 120. [4Fe-4S] cluster contacts are provided by cysteine 61, cysteine 64, cysteine 67, cysteine 71, cysteine 100, cysteine 103, cysteine 106, and cysteine 110.

The protein belongs to the complex I 23 kDa subunit family. In terms of assembly, NDH-1 is composed of 13 different subunits. Subunits NuoA, H, J, K, L, M, N constitute the membrane sector of the complex. The cofactor is [4Fe-4S] cluster.

The protein resides in the cell inner membrane. The enzyme catalyses a quinone + NADH + 5 H(+)(in) = a quinol + NAD(+) + 4 H(+)(out). In terms of biological role, NDH-1 shuttles electrons from NADH, via FMN and iron-sulfur (Fe-S) centers, to quinones in the respiratory chain. The immediate electron acceptor for the enzyme in this species is believed to be ubiquinone. Couples the redox reaction to proton translocation (for every two electrons transferred, four hydrogen ions are translocated across the cytoplasmic membrane), and thus conserves the redox energy in a proton gradient. In Blochmanniella pennsylvanica (strain BPEN), this protein is NADH-quinone oxidoreductase subunit I.